A 283-amino-acid chain; its full sequence is 2-dehydro-3-deoxyphosphooctonate aldolase (283 aa).

It belongs to the KdsA family.

It is found in the cytoplasm. The catalysed reaction is D-arabinose 5-phosphate + phosphoenolpyruvate + H2O = 3-deoxy-alpha-D-manno-2-octulosonate-8-phosphate + phosphate. Its pathway is carbohydrate biosynthesis; 3-deoxy-D-manno-octulosonate biosynthesis; 3-deoxy-D-manno-octulosonate from D-ribulose 5-phosphate: step 2/3. It functions in the pathway bacterial outer membrane biogenesis; lipopolysaccharide biosynthesis. The protein is 2-dehydro-3-deoxyphosphooctonate aldolase of Parasynechococcus marenigrum (strain WH8102).